Reading from the N-terminus, the 294-residue chain is Early 4 ORF6 protein (294 aa).

Residues 239-255 (ARRTRRLMLRAVRIIAE) carry the Nuclear localization signal motif.

The protein belongs to the adenoviridae E4 30 to 34 kDa protein family. Interacts with E1B-55k.

Its subcellular location is the host nucleus. It is found in the host cytoplasm. Functionally, plays a major role to prevent cellular inhibition of viral genome replication by nuclear bodies. Assembles an SCF-like E3 ubiquitin ligase complex based on the cellular proteins ELOB, ELOC, CUL5 and RBX1, in cooperation with viral E1B-55K. This viral RING-type ligase ubiquitinates cellular substrates prior to proteasomal degradation: p53/TP53, LIG4, MRE11-RAD50-NBS1 (MRN) complex, ITGA3, DAXX and BLM. In Homo sapiens (Human), this protein is Early 4 ORF6 protein.